A 706-amino-acid polypeptide reads, in one-letter code: Lysophospholipase 2 (706 aa).

Positions 1–19 (MQLRNILQASSLISGLSLA) are cleaved as a signal peptide. Positions 36-588 (PCPSDDTSLV…ADYCWNGTLS (553 aa)) constitute a PLA2c domain. N-linked (GlcNAc...) asparagine glycans are attached at residues N47, N80, N94, N125, N162, N181, N193, N217, N279, N309, N365, N390, N491, N515, N524, N543, N567, N584, N598, N630, N634, N642, N648, N652, and N658. Positions 627–672 (TSGNTTSNSTTSTSSNVTSNSNSSSNTTLNSNSSSSSISSSTARSS) are disordered. The GPI-anchor amidated asparagine moiety is linked to residue N680. Residues 681-706 (AAAISYANTNTLMSLLGAITALFGLI) constitute a propeptide, removed in mature form.

Belongs to the lysophospholipase family. In terms of processing, the GPI-anchor is attached to the protein in the endoplasmic reticulum and serves to target the protein to the cell surface. There, the glucosamine-inositol phospholipid moiety is cleaved off and the GPI-modified mannoprotein is covalently attached via its lipidless GPI glycan remnant to the 1,6-beta-glucan of the outer cell wall layer.

It is found in the secreted. The protein localises to the cell wall. Its subcellular location is the membrane. The enzyme catalyses a 1-acyl-sn-glycero-3-phosphocholine + H2O = sn-glycerol 3-phosphocholine + a fatty acid + H(+). The catalysed reaction is 1-hexadecanoyl-sn-glycero-3-phosphoethanolamine + H2O = sn-glycero-3-phosphoethanolamine + hexadecanoate + H(+). It catalyses the reaction 1-hexadecanoyl-sn-glycero-3-phosphocholine + H2O = sn-glycerol 3-phosphocholine + hexadecanoate + H(+). It carries out the reaction 1-hexadecanoyl-sn-glycero-3-phospho-L-serine + H2O = sn-glycero-3-phospho-L-serine + hexadecanoate + H(+). The enzyme catalyses 1,2-dihexadecanoyl-sn-glycero-3-phosphocholine + H2O = 1-hexadecanoyl-sn-glycero-3-phosphocholine + hexadecanoate + H(+). In terms of biological role, sequentially removes both fatty acyl groups from diacylglycerophospholipids and therefore has both phospholipase A and lysophospholipase activities. However, it does not display transacylase activity. Substrate preference is phosphatidylserine &gt; phosphatidylinositol &gt; phosphatidylcholine &gt; phosphatidylethanolamine. The substrate specificity is pH- and ion-dependent. In contrast with activities observed at optimum pH 3.5, the order of substrate preference at pH 5.5 is phosphatidylserine = phosphatidylethanolamine &gt; phosphatidylcholine &gt; phosphatidylinositol. This chain is Lysophospholipase 2 (PLB2), found in Saccharomyces cerevisiae (strain ATCC 204508 / S288c) (Baker's yeast).